The chain runs to 162 residues: tRNA (cytidine(34)-2'-O)-methyltransferase (162 aa).

Positions 83, 105, 127, and 135 each coordinate S-adenosyl-L-methionine.

This sequence belongs to the class IV-like SAM-binding methyltransferase superfamily. RNA methyltransferase TrmH family. TrmL subfamily. Homodimer.

The protein localises to the cytoplasm. The enzyme catalyses cytidine(34) in tRNA + S-adenosyl-L-methionine = 2'-O-methylcytidine(34) in tRNA + S-adenosyl-L-homocysteine + H(+). It carries out the reaction 5-carboxymethylaminomethyluridine(34) in tRNA(Leu) + S-adenosyl-L-methionine = 5-carboxymethylaminomethyl-2'-O-methyluridine(34) in tRNA(Leu) + S-adenosyl-L-homocysteine + H(+). Functionally, methylates the ribose at the nucleotide 34 wobble position in the two leucyl isoacceptors tRNA(Leu)(CmAA) and tRNA(Leu)(cmnm5UmAA). Catalyzes the methyl transfer from S-adenosyl-L-methionine to the 2'-OH of the wobble nucleotide. The sequence is that of tRNA (cytidine(34)-2'-O)-methyltransferase from Yersinia pestis.